We begin with the raw amino-acid sequence, 370 residues long: MTVGIVEEKSVTFDTELRLESGRILGPITLAYETYGELNAARSNAILVAHAWTGNAHLAGRYSENEQKPGWWNEIVGPGKLLDTDRYFIICANVIGSCFGSTGPASINPKTGKKYNLSFPVITVRDMVRAQQLLIDHLGIDRLFSVMGGSMGGMQALEWATQFPERIASAIVLATTPRPSAQAISLNAVARWAIFNDPTWKKGEYRKNPKDGLALARGIGHITFLSDESMTAKFGRRFSARDGQFDFFGRFEVERYLSYNGYNFVDRFDANSFLYLAKALDLYDVAWGYESLEEAFAQVAAPIQFFAFSSDWLYPPAQTEEMVTTLEKLGKPVEYHLITSAYGHDAFLLEHETFTPMVRAFLEKVKTAAK.

The AB hydrolase-1 domain maps to 44 to 350 (NAILVAHAWT…AYGHDAFLLE (307 aa)). Catalysis depends on serine 150, which acts as the Nucleophile. Residue arginine 217 participates in substrate binding. Active-site residues include aspartate 311 and histidine 344. Substrate is bound at residue aspartate 345.

It belongs to the AB hydrolase superfamily. MetX family. As to quaternary structure, homodimer.

It is found in the cytoplasm. The catalysed reaction is L-homoserine + acetyl-CoA = O-acetyl-L-homoserine + CoA. The protein operates within amino-acid biosynthesis; L-methionine biosynthesis via de novo pathway; O-acetyl-L-homoserine from L-homoserine: step 1/1. Transfers an acetyl group from acetyl-CoA to L-homoserine, forming acetyl-L-homoserine. The polypeptide is Homoserine O-acetyltransferase (Geotalea uraniireducens (strain Rf4) (Geobacter uraniireducens)).